A 133-amino-acid polypeptide reads, in one-letter code: Protein PsiE homolog (133 aa).

The next 4 helical transmembrane spans lie at 13–33, 55–75, 81–101, and 105–125; these read LQWI…IFLI, VESI…IKYF, FPLR…IIVS, and PMET…LYIS.

This sequence belongs to the PsiE family.

The protein resides in the cell membrane. This is Protein PsiE homolog from Bacillus cereus (strain ATCC 10987 / NRS 248).